Here is a 1091-residue protein sequence, read N- to C-terminus: Voltage-dependent calcium channel subunit alpha-2/delta-1 (1091 aa).

The signal sequence occupies residues 1 to 24 (MAAGCLLALTLTLFQSWLIGPSSE). Residues 25-1061 (EPFPSPVTIK…VLEDYTDCGG (1037 aa)) lie on the Extracellular side of the membrane. Asn92 is a glycosylation site (N-linked (GlcNAc...) asparagine). At Ser119 the chain carries Phosphoserine. Asn136 and Asn184 each carry an N-linked (GlcNAc...) asparagine glycan. The region spanning 252–429 (DMLILVDVSG…INTQEYLDVL (178 aa)) is the VWFA domain. A divalent metal cation is bound by residues Asp258, Ser260, and Ser262. The MIDAS-like motif signature appears at 258–262 (DVSGS). 2 N-linked (GlcNAc...) asparagine glycosylation sites follow: Asn323 and Asn347. A disulfide bond links Cys403 and Cys1047. The Cache domain occupies 445–536 (WTNVYLDALE…QPKNPKSQEP (92 aa)). N-linked (GlcNAc...) asparagine glycosylation is found at Asn593, Asn769, Asn876, and Asn973. The helical transmembrane segment at 1062 to 1082 (VSGLNPSLWSIFGLQFILLWL) threads the bilayer. The Cytoplasmic portion of the chain corresponds to 1083-1091 (VSGSRHYLW).

This sequence belongs to the calcium channel subunit alpha-2/delta family. Dimer formed of alpha-2-1 and delta-1 chains; disulfide-linked. Voltage-dependent calcium channels are multisubunit complexes, consisting of alpha-1 (CACNA1), alpha-2 (CACNA2D), beta (CACNB) and delta (CACNA2D) subunits in a 1:1:1:1 ratio. Proteolytically processed into subunits alpha-2-1 and delta-1 that are disulfide-linked.

Its subcellular location is the membrane. It is found in the cell membrane. The alpha-2/delta subunit of voltage-dependent calcium channels regulates calcium current density and activation/inactivation kinetics of the calcium channel. Plays an important role in excitation-contraction coupling. The sequence is that of Voltage-dependent calcium channel subunit alpha-2/delta-1 (Cacna2d1) from Rattus norvegicus (Rat).